Consider the following 205-residue polypeptide: SREBP regulating gene protein (205 aa).

Over 1-16 the chain is Cytoplasmic; the sequence is MVNLAAMVWRRLLRKR. Residues 17 to 35 form a helical membrane-spanning segment; it reads WVLALVFGLSLVYFLSSTF. The Lumenal segment spans residues 36 to 205; the sequence is KQEERAVRDR…GESPPELFPA (170 aa). Residue Asn-67 is glycosylated (N-linked (GlcNAc...) asparagine).

It belongs to the SPRING family. Interacts with SCAP.

Its subcellular location is the golgi apparatus membrane. Functionally, positively regulates hepatic SREBP signaling pathway by modulating the proper localization of SCAP (SREBP cleavage-activating protein) to the endoplasmic reticulum, thereby controlling the level of functional SCAP. The chain is SREBP regulating gene protein from Homo sapiens (Human).